Consider the following 395-residue polypeptide: Cyclin-A2 (395 aa).

The tract at residues 1-93 (MLAEQENQEN…EEAADAPGLR (93 aa)) is disordered. Over residues 27–60 (ALGLLRGGPARPGPAAQAARNGEGRGAAAGQQQQ) the composition is skewed to low complexity.

It belongs to the cyclin family. Cyclin AB subfamily. As to quaternary structure, interacts with the CDK1 and CDK2 protein kinases to form serine/threonine kinase holoenzyme complexes.

Its subcellular location is the nucleus. It localises to the cytoplasm. In terms of biological role, cyclin which controls both the G1/S and the G2/M transition phases of the cell cycle. Functions through the formation of specific serine/threonine kinase holoenzyme complexes with the cyclin-dependent protein kinases CDK1 and CDK2. The cyclin subunit confers the substrate specificity of these complexes and differentially interacts with and activates CDK1 and CDK2 throughout the cell cycle. The protein is Cyclin-A2 of Gallus gallus (Chicken).